Consider the following 389-residue polypeptide: Succinate--CoA ligase [ADP-forming] subunit beta (389 aa).

The 228-residue stretch at 9–236 folds into the ATP-grasp domain; the sequence is RDMFEAHGVP…KDSADPLEAK (228 aa). ATP-binding positions include Lys-45, 52-54, Ala-94, and Glu-99; that span reads GRG. Asn-191 and Asp-205 together coordinate Mg(2+). Substrate contacts are provided by residues Asn-256 and 318-320; that span reads GIT.

It belongs to the succinate/malate CoA ligase beta subunit family. As to quaternary structure, heterotetramer of two alpha and two beta subunits. Mg(2+) is required as a cofactor.

It catalyses the reaction succinate + ATP + CoA = succinyl-CoA + ADP + phosphate. The enzyme catalyses GTP + succinate + CoA = succinyl-CoA + GDP + phosphate. It participates in carbohydrate metabolism; tricarboxylic acid cycle; succinate from succinyl-CoA (ligase route): step 1/1. Functionally, succinyl-CoA synthetase functions in the citric acid cycle (TCA), coupling the hydrolysis of succinyl-CoA to the synthesis of either ATP or GTP and thus represents the only step of substrate-level phosphorylation in the TCA. The beta subunit provides nucleotide specificity of the enzyme and binds the substrate succinate, while the binding sites for coenzyme A and phosphate are found in the alpha subunit. This is Succinate--CoA ligase [ADP-forming] subunit beta from Renibacterium salmoninarum (strain ATCC 33209 / DSM 20767 / JCM 11484 / NBRC 15589 / NCIMB 2235).